Consider the following 102-residue polypeptide: Large ribosomal subunit protein bL28 (102 aa).

Belongs to the bacterial ribosomal protein bL28 family.

The sequence is that of Large ribosomal subunit protein bL28 from Bradyrhizobium diazoefficiens (strain JCM 10833 / BCRC 13528 / IAM 13628 / NBRC 14792 / USDA 110).